The sequence spans 302 residues: Sulfate adenylyltransferase subunit 2 (302 aa).

This sequence belongs to the PAPS reductase family. CysD subfamily. Heterodimer composed of CysD, the smaller subunit, and CysN.

It catalyses the reaction sulfate + ATP + H(+) = adenosine 5'-phosphosulfate + diphosphate. Its pathway is sulfur metabolism; hydrogen sulfide biosynthesis; sulfite from sulfate: step 1/3. In terms of biological role, with CysN forms the ATP sulfurylase (ATPS) that catalyzes the adenylation of sulfate producing adenosine 5'-phosphosulfate (APS) and diphosphate, the first enzymatic step in sulfur assimilation pathway. APS synthesis involves the formation of a high-energy phosphoric-sulfuric acid anhydride bond driven by GTP hydrolysis by CysN coupled to ATP hydrolysis by CysD. The polypeptide is Sulfate adenylyltransferase subunit 2 (Salmonella paratyphi A (strain AKU_12601)).